The chain runs to 110 residues: Small ribosomal subunit protein eS25 (110 aa).

Residues 1–37 (MGGASKKPISTMEKRLKKEAEKQQKAEEKKKGPSKTG) are disordered. Over residues 12–37 (MEKRLKKEAEKQQKAEEKKKGPSKTG) the composition is skewed to basic and acidic residues.

Belongs to the eukaryotic ribosomal protein eS25 family.

The polypeptide is Small ribosomal subunit protein eS25 (rps25e) (Saccharolobus solfataricus (strain ATCC 35092 / DSM 1617 / JCM 11322 / P2) (Sulfolobus solfataricus)).